The following is a 358-amino-acid chain: uncharacterized protein (358 aa).

The tract at residues 324–358 is disordered; it reads DMEVEETPPTTNKDLPRGATQPKRNSIKRVSKLID. A compositionally biased stretch (basic residues) spans 348 to 358; sequence NSIKRVSKLID.

This is an uncharacterized protein from Mycoplasma pneumoniae (strain ATCC 29342 / M129 / Subtype 1) (Mycoplasmoides pneumoniae).